We begin with the raw amino-acid sequence, 436 residues long: MGQVLPLVTRQGDRIAIVSGLRTPFARQGTAFHGIPAVDLGKMVVGELLARSEIPAEVIEQLVFGQVVQMPEAPNIAREIVLGTGMNVHTDAYSVSRACATSFQAVANVAESLMAGTIRAGIAGGADSSSVLPIGVSKKLARVLVDVNKARTMSQRLKLFSRLRLRDLMPVPPAVAEYSTGLRMGDTAEQMAKTYGITREQQDALAHRSHQRAAQAWSDGKLKEEVMTAFIPPYKQPLVEDNNIRGNSSLADYAKLRPAFDRKHGTVTAANSTPLTDGAAAVILMTESRAKELGLVPLGYLRSYAFTAIDVWQDMLLGPAWSTPLALERAGLTMSDLTLIDMHEAFAAQTLANIQLLGSERFAREVLGRAHATGEVDDSKFNVLGGSIAYGHPFAATGARMITQTLHELHRRGGGFGLVTACAAGGLGAAMVLEAE.

The Acyl-thioester intermediate role is filled by Cys-99. Residues His-392 and Cys-422 each act as proton acceptor in the active site.

This sequence belongs to the thiolase-like superfamily. Thiolase family. Heterotetramer of two alpha chains (FadJ) and two beta chains (FadI).

It localises to the cytoplasm. It carries out the reaction an acyl-CoA + acetyl-CoA = a 3-oxoacyl-CoA + CoA. It participates in lipid metabolism; fatty acid beta-oxidation. Its function is as follows. Catalyzes the final step of fatty acid oxidation in which acetyl-CoA is released and the CoA ester of a fatty acid two carbons shorter is formed. This chain is 3-ketoacyl-CoA thiolase, found in Escherichia coli (strain 55989 / EAEC).